Reading from the N-terminus, the 209-residue chain is Ribonuclease HII (209 aa).

Residues 18–209 form the RNase H type-2 domain; sequence GLIAGVDEVG…FKPVKALLEG (192 aa). Aspartate 24, glutamate 25, and aspartate 116 together coordinate a divalent metal cation.

It belongs to the RNase HII family. Requires Mn(2+) as cofactor. Mg(2+) is required as a cofactor.

The protein localises to the cytoplasm. The enzyme catalyses Endonucleolytic cleavage to 5'-phosphomonoester.. Functionally, endonuclease that specifically degrades the RNA of RNA-DNA hybrids. The polypeptide is Ribonuclease HII (Shewanella putrefaciens (strain CN-32 / ATCC BAA-453)).